We begin with the raw amino-acid sequence, 140 residues long: Nucleoside diphosphate kinase (140 aa).

Positions 11, 59, 87, 93, 104, and 114 each coordinate ATP. H117 acts as the Pros-phosphohistidine intermediate in catalysis.

Belongs to the NDK family. In terms of assembly, homotetramer. The cofactor is Mg(2+).

The protein resides in the cytoplasm. The catalysed reaction is a 2'-deoxyribonucleoside 5'-diphosphate + ATP = a 2'-deoxyribonucleoside 5'-triphosphate + ADP. It carries out the reaction a ribonucleoside 5'-diphosphate + ATP = a ribonucleoside 5'-triphosphate + ADP. Functionally, major role in the synthesis of nucleoside triphosphates other than ATP. The ATP gamma phosphate is transferred to the NDP beta phosphate via a ping-pong mechanism, using a phosphorylated active-site intermediate. In Brucella melitensis biotype 1 (strain ATCC 23456 / CCUG 17765 / NCTC 10094 / 16M), this protein is Nucleoside diphosphate kinase.